The following is a 385-amino-acid chain: Chaperone protein DnaJ (385 aa).

The 66-residue stretch at D5–G70 folds into the J domain. The segment at G136–E213 adopts a CR-type zinc-finger fold. Positions 149, 152, 165, 168, 187, 190, 201, and 204 each coordinate Zn(2+). CXXCXGXG motif repeat units follow at residues C149–G156, C165–G172, C187–G194, and C201–G208.

Belongs to the DnaJ family. In terms of assembly, homodimer. Zn(2+) is required as a cofactor.

Its subcellular location is the cytoplasm. Participates actively in the response to hyperosmotic and heat shock by preventing the aggregation of stress-denatured proteins and by disaggregating proteins, also in an autonomous, DnaK-independent fashion. Unfolded proteins bind initially to DnaJ; upon interaction with the DnaJ-bound protein, DnaK hydrolyzes its bound ATP, resulting in the formation of a stable complex. GrpE releases ADP from DnaK; ATP binding to DnaK triggers the release of the substrate protein, thus completing the reaction cycle. Several rounds of ATP-dependent interactions between DnaJ, DnaK and GrpE are required for fully efficient folding. Also involved, together with DnaK and GrpE, in the DNA replication of plasmids through activation of initiation proteins. The protein is Chaperone protein DnaJ of Helicobacter hepaticus (strain ATCC 51449 / 3B1).